The primary structure comprises 495 residues: Catalase (495 aa).

Positions 1–25 (MSNNKKLTSLFGAPVSDRENSMTAG) are disordered. Residues His55 and Asn128 contribute to the active site. Tyr338 lines the heme pocket.

The protein belongs to the catalase family. In terms of assembly, homodimer. It depends on heme as a cofactor.

It catalyses the reaction 2 H2O2 = O2 + 2 H2O. Its function is as follows. Decomposes hydrogen peroxide into water and oxygen; serves to protect cells from the toxic effects of hydrogen peroxide. This chain is Catalase (katA), found in Staphylococcus saprophyticus subsp. saprophyticus (strain ATCC 15305 / DSM 20229 / NCIMB 8711 / NCTC 7292 / S-41).